The sequence spans 1562 residues: Phospholipid-transporting ATPase dnf1 (1562 aa).

Disordered regions lie at residues 1 to 38, 55 to 94, 115 to 134, and 146 to 166; these read MKSS…ADDG, LPLG…SDSR, TPST…KKAH, and PLDD…NGRP. Topologically, residues 1-275 are extracellular; it reads MKSSGIAGDS…IAIMQMIPGW (275 aa). Residues 12-21 show a composition bias toward polar residues; that stretch reads GFETNFLNET. Over residues 60 to 69 the composition is skewed to acidic residues; it reads DENELDEIDI. Over residues 71–86 the composition is skewed to basic and acidic residues; it reads GDSKKLDSVEVDESHD. The chain crosses the membrane as a helical span at residues 276-296; sequence STTGTYTTIIPLLIFISIAIL. Residues 297-574 are Cytoplasmic-facing; the sequence is REGFDNYRRY…APSMQKVTNR (278 aa). The tract at residues 347-406 is disordered; sequence SQESASRSTIRSTDEREPERTSEDPPQLPPSPSSPSSPALSVKPNIDPQPPLYNSTLTTT. The span at 358-369 shows a compositional bias: basic and acidic residues; sequence STDEREPERTSE. Residues 372-381 are compositionally biased toward pro residues; it reads PQLPPSPSSP. The helical transmembrane segment at 575–595 threads the bilayer; that stretch reads IVIFIFALVVSMAIYCTAAYF. Over 596-614 the chain is Extracellular; it reads VWQKKVERKLWYLTNSKLS. Residues 615 to 635 traverse the membrane as a helical segment; it reads FVPILVSFIILYNTMVPISLY. The Cytoplasmic portion of the chain corresponds to 636-1309; that stretch reads VSMEIIRVFQ…YILGTFYKEQ (674 aa). D684 (4-aspartylphosphate intermediate) is an active-site residue. Positions 684, 685, 686, 794, 843, 845, 848, and 866 each coordinate ATP. D684 contacts Mg(2+). Residue T686 participates in Mg(2+) binding. S954 is subject to Phosphoserine. ATP-binding positions include R1022, T1023, T1102, G1103, D1104, 1181-1188, R1216, and K1222; that span reads VIVIDGST. Residue D1243 coordinates Mg(2+). 2 residues coordinate ATP: N1246 and D1247. The chain crosses the membrane as a helical span at residues 1310–1330; that stretch reads FFFLMQAIMQPFVGYTGQSLY. The Extracellular portion of the chain corresponds to 1331-1332; the sequence is ES. The chain crosses the membrane as a helical span at residues 1333-1353; that stretch reads WGLTCFNTLFSSLCVIGLGIF. At 1354-1381 the chain is on the cytoplasmic side; the sequence is EKDLSASTVIAVPELYQKGINNEAFNWR. Residues 1382-1402 form a helical membrane-spanning segment; it reads VYFGWCSIAFIQAFLVFYVTY. Topologically, residues 1403 to 1414 are extracellular; the sequence is SLFGMKELNDNN. The chain crosses the membrane as a helical span at residues 1415 to 1435; it reads IFAYGQLIFTAAIFIMNFKLV. The Cytoplasmic portion of the chain corresponds to 1436–1443; sequence FIEMQYIN. A helical transmembrane segment spans residues 1444 to 1464; the sequence is IISIIVLVLTSLAWFLFNIFI. Residues 1465–1490 are Extracellular-facing; the sequence is SEHYPDKNLYLARSQFLHHFGKNPSW. Residues 1491-1511 traverse the membrane as a helical segment; sequence WLTMLFVMVCALTIDIVAQML. Residues 1512–1562 lie on the Cytoplasmic side of the membrane; it reads RRTLRPTDTDIFVEMENDAFVRSRFEQESGEFLQANAPSVDEIEQYLKSRD.

It belongs to the cation transport ATPase (P-type) (TC 3.A.3) family. Type IV subfamily. It depends on Mg(2+) as a cofactor.

Its subcellular location is the golgi apparatus. It localises to the trans-Golgi network membrane. The protein resides in the endosome membrane. The catalysed reaction is ATP + H2O + phospholipidSide 1 = ADP + phosphate + phospholipidSide 2.. It catalyses the reaction a 1,2-diacyl-sn-glycero-3-phosphocholine(out) + ATP + H2O = a 1,2-diacyl-sn-glycero-3-phosphocholine(in) + ADP + phosphate + H(+). The enzyme catalyses a 1,2-diacyl-sn-glycero-3-phosphoethanolamine(out) + ATP + H2O = a 1,2-diacyl-sn-glycero-3-phosphoethanolamine(in) + ADP + phosphate + H(+). Catalytic component of a P4-ATPase flippase complex which catalyzes the hydrolysis of ATP coupled to the transport of phosphatidylcholine and small amounts of phosphatidylethanolamine from the lumen to the cytosolic leaflet of the trans-Golgi network and ensures the maintenance of asymmetric distribution of phospholipids. May be involved in transport from early endosomes to the trans-Golgi network (TGN). This chain is Phospholipid-transporting ATPase dnf1, found in Schizosaccharomyces pombe (strain 972 / ATCC 24843) (Fission yeast).